Consider the following 280-residue polypeptide: Energy-coupling factor transporter ATP-binding protein EcfA1 (280 aa).

Residues 7 to 241 enclose the ABC transporter domain; the sequence is IEVAHLKYEY…GQRLLDLGLD (235 aa). 41–48 lines the ATP pocket; the sequence is GHNGSGKS.

Belongs to the ABC transporter superfamily. Energy-coupling factor EcfA family. As to quaternary structure, forms a stable energy-coupling factor (ECF) transporter complex composed of 2 membrane-embedded substrate-binding proteins (S component), 2 ATP-binding proteins (A component) and 2 transmembrane proteins (T component).

It is found in the cell membrane. In terms of biological role, ATP-binding (A) component of a common energy-coupling factor (ECF) ABC-transporter complex. Unlike classic ABC transporters this ECF transporter provides the energy necessary to transport a number of different substrates. This Latilactobacillus sakei subsp. sakei (strain 23K) (Lactobacillus sakei subsp. sakei) protein is Energy-coupling factor transporter ATP-binding protein EcfA1.